Consider the following 244-residue polypeptide: ATP synthase subunit 4, mitochondrial (244 aa).

The N-terminal 36 residues, 1 to 36, are a transit peptide targeting the mitochondrion; it reads MASRLAKSAICAARVRPVLSSRTIPAAATTLTSTRS.

It belongs to the eukaryotic ATPase B chain family. In terms of assembly, F-type ATPases have 2 components, CF(1) - the catalytic core - and CF(0) - the membrane proton channel. In yeast, the dimeric form of ATP synthase consists of 17 polypeptides: alpha, beta, gamma, delta, epsilon, 4 (B), 5 (OSCP), 6 (A), 8, 9 (C), d, E (Tim11), f, g, h, i/j and k.

It localises to the mitochondrion. The protein localises to the mitochondrion inner membrane. In terms of biological role, mitochondrial membrane ATP synthase (F(1)F(0) ATP synthase or Complex V) produces ATP from ADP in the presence of a proton gradient across the membrane which is generated by electron transport complexes of the respiratory chain. F-type ATPases consist of two structural domains, F(1) - containing the extramembraneous catalytic core, and F(0) - containing the membrane proton channel, linked together by a central stalk and a peripheral stalk. During catalysis, ATP synthesis in the catalytic domain of F(1) is coupled via a rotary mechanism of the central stalk subunits to proton translocation. Part of the complex F(0) domain and the peripheric stalk, which acts as a stator to hold the catalytic alpha(3)beta(3) subcomplex and subunit a/ATP6 static relative to the rotary elements. The chain is ATP synthase subunit 4, mitochondrial (ATP4) from Paracoccidioides brasiliensis.